Consider the following 88-residue polypeptide: uncharacterized protein (88 aa).

A helical membrane pass occupies residues 34–54; the sequence is IIIAVILIFFLTIVGLFYLII.

It localises to the membrane. This is an uncharacterized protein from Ureaplasma parvum serovar 3 (strain ATCC 700970).